The sequence spans 130 residues: Ribosome-binding factor A (130 aa).

Belongs to the RbfA family. Monomer. Binds 30S ribosomal subunits, but not 50S ribosomal subunits or 70S ribosomes.

It localises to the cytoplasm. In terms of biological role, one of several proteins that assist in the late maturation steps of the functional core of the 30S ribosomal subunit. Associates with free 30S ribosomal subunits (but not with 30S subunits that are part of 70S ribosomes or polysomes). Required for efficient processing of 16S rRNA. May interact with the 5'-terminal helix region of 16S rRNA. In Prochlorococcus marinus (strain MIT 9301), this protein is Ribosome-binding factor A.